The following is a 93-amino-acid chain: DNA/RNA-binding protein Alba 2 (93 aa).

The protein belongs to the histone-like Alba family.

It is found in the cytoplasm. The protein localises to the chromosome. Functionally, binds double-stranded DNA tightly but without sequence specificity. Involved in DNA compaction. The protein is DNA/RNA-binding protein Alba 2 of Methanopyrus kandleri (strain AV19 / DSM 6324 / JCM 9639 / NBRC 100938).